A 269-amino-acid chain; its full sequence is G-protein coupled receptor homolog C3 (269 aa).

Residues C28 and C107 are joined by a disulfide bond. 5 consecutive transmembrane segments (helical) span residues 30–50 (IMSV…TLMS), 71–91 (IGIL…SPVS), 123–143 (LMQI…FVYC), 165–185 (IVLM…IVLM), and 200–220 (HLCL…ISLA).

The protein belongs to the G-protein coupled receptor 1 family.

It is found in the host cell membrane. The protein is G-protein coupled receptor homolog C3 of Sus scrofa (Pig).